Consider the following 411-residue polypeptide: MTTPADDQGKSPENPWPVRAVATRVAKYIDRLGMVWIEGQLTELKIRQTTAWMVLRDPAADMSLSVSCPRDLVANAPVPLSEGTQVIVLGKPQFYTRNGSFSLRISEIRAVGIGELLARIDRLRRLLDAEGLFDPRLKRPIPFLPGTIGLITGRASHAERDVMTVAANRWPAVRFAVRNTIVQGPNAVPQIVGALRELDRDPGVDVIVLARGGGSVEDLLPFSDETLCREIASCTTPVVSAVGHEPDNPLCDLVADLRAATPTDAAKRVVPDAAAEQAFVTDLRRRSARALRQWVHREQHHLDQLRSRPVLARPLQAIDARADEVHRAVAAARRDVRRMVTVESERVGHLSARLTTLGPAATLARGYAVVQTMPDTNVLRTTADAPAGTHLRIRVADGAITAVSEGTDEAH.

It belongs to the XseA family. As to quaternary structure, heterooligomer composed of large and small subunits.

It localises to the cytoplasm. The catalysed reaction is Exonucleolytic cleavage in either 5'- to 3'- or 3'- to 5'-direction to yield nucleoside 5'-phosphates.. Its function is as follows. Bidirectionally degrades single-stranded DNA into large acid-insoluble oligonucleotides, which are then degraded further into small acid-soluble oligonucleotides. The protein is Exodeoxyribonuclease 7 large subunit of Mycobacterium sp. (strain KMS).